The following is a 207-amino-acid chain: Small ribosomal subunit protein uS4 (207 aa).

An S4 RNA-binding domain is found at 96 to 156; it reads RRLDNVVYRL…EKFKTSSFIA (61 aa).

Belongs to the universal ribosomal protein uS4 family. As to quaternary structure, part of the 30S ribosomal subunit. Contacts protein S5. The interaction surface between S4 and S5 is involved in control of translational fidelity.

Functionally, one of the primary rRNA binding proteins, it binds directly to 16S rRNA where it nucleates assembly of the body of the 30S subunit. In terms of biological role, with S5 and S12 plays an important role in translational accuracy. This is Small ribosomal subunit protein uS4 from Leptospira interrogans serogroup Icterohaemorrhagiae serovar copenhageni (strain Fiocruz L1-130).